Here is a 276-residue protein sequence, read N- to C-terminus: Pantothenate synthetase (276 aa).

ATP is bound at residue Met27–His34. His34 functions as the Proton donor in the catalytic mechanism. Gln58 is a (R)-pantoate binding site. A beta-alanine-binding site is contributed by Gln58. Gly147–Asp150 lines the ATP pocket. Gln153 provides a ligand contact to (R)-pantoate. Residues Val176 and Leu184–Arg187 each bind ATP.

The protein belongs to the pantothenate synthetase family. Homodimer.

Its subcellular location is the cytoplasm. The enzyme catalyses (R)-pantoate + beta-alanine + ATP = (R)-pantothenate + AMP + diphosphate + H(+). The protein operates within cofactor biosynthesis; (R)-pantothenate biosynthesis; (R)-pantothenate from (R)-pantoate and beta-alanine: step 1/1. Its function is as follows. Catalyzes the condensation of pantoate with beta-alanine in an ATP-dependent reaction via a pantoyl-adenylate intermediate. In Helicobacter acinonychis (strain Sheeba), this protein is Pantothenate synthetase.